Reading from the N-terminus, the 407-residue chain is Indoleamine 2,3-dioxygenase 2 (407 aa).

H347 lines the heme pocket.

The protein belongs to the indoleamine 2,3-dioxygenase family. It depends on heme as a cofactor. As to expression, detected in liver, small intestine, spleen, placenta, thymus, lung, brain, kidney, and colon. Also expressed at low level in testis and thyroid. Not expressed in the majority of human tumor samples (&gt;99%).

It carries out the reaction L-tryptophan + O2 = N-formyl-L-kynurenine. The protein operates within amino-acid degradation; L-tryptophan degradation via kynurenine pathway; L-kynurenine from L-tryptophan: step 1/2. Activity is inhibited by D-1MT (1-methyl-D-tryptophan) and MTH-trp (methylthiohydantoin-DL-tryptophan) but not L-1MT (1-methyl-L-tryptophan). In terms of biological role, catalyzes the first and rate limiting step of the catabolism of the essential amino acid tryptophan along the kynurenine pathway. Involved in immune regulation. May not play a significant role in tryptophan-related tumoral resistance. The protein is Indoleamine 2,3-dioxygenase 2 of Homo sapiens (Human).